The sequence spans 559 residues: Chaperonin GroEL 3 (559 aa).

ATP contacts are provided by residues 88–92, G426, and D507; that span reads DGTTT.

The protein belongs to the chaperonin (HSP60) family. Forms a cylinder of 14 subunits composed of two heptameric rings stacked back-to-back. Interacts with the co-chaperonin GroES.

Its subcellular location is the cytoplasm. It catalyses the reaction ATP + H2O + a folded polypeptide = ADP + phosphate + an unfolded polypeptide.. Its function is as follows. Together with its co-chaperonin GroES, plays an essential role in assisting protein folding. The GroEL-GroES system forms a nano-cage that allows encapsulation of the non-native substrate proteins and provides a physical environment optimized to promote and accelerate protein folding. The protein is Chaperonin GroEL 3 of Methylococcus capsulatus (strain ATCC 33009 / NCIMB 11132 / Bath).